The sequence spans 505 residues: ATP synthase subunit alpha, chloroplastic (505 aa).

170 to 177 (GDRQTGKT) is a binding site for ATP.

This sequence belongs to the ATPase alpha/beta chains family. As to quaternary structure, F-type ATPases have 2 components, CF(1) - the catalytic core - and CF(0) - the membrane proton channel. CF(1) has five subunits: alpha(3), beta(3), gamma(1), delta(1), epsilon(1). CF(0) has four main subunits: a, b, b' and c.

The protein resides in the plastid. It is found in the chloroplast thylakoid membrane. The catalysed reaction is ATP + H2O + 4 H(+)(in) = ADP + phosphate + 5 H(+)(out). Functionally, produces ATP from ADP in the presence of a proton gradient across the membrane. The alpha chain is a regulatory subunit. The protein is ATP synthase subunit alpha, chloroplastic of Oenothera elata subsp. hookeri (Hooker's evening primrose).